We begin with the raw amino-acid sequence, 126 residues long: Holo-[acyl-carrier-protein] synthase (126 aa).

Residues D9 and E58 each contribute to the Mg(2+) site.

It belongs to the P-Pant transferase superfamily. AcpS family. Mg(2+) serves as cofactor.

The protein localises to the cytoplasm. It carries out the reaction apo-[ACP] + CoA = holo-[ACP] + adenosine 3',5'-bisphosphate + H(+). Functionally, transfers the 4'-phosphopantetheine moiety from coenzyme A to a Ser of acyl-carrier-protein. In Shewanella denitrificans (strain OS217 / ATCC BAA-1090 / DSM 15013), this protein is Holo-[acyl-carrier-protein] synthase.